Reading from the N-terminus, the 335-residue chain is Phosphatidylglycerol--prolipoprotein diacylglyceryl transferase (335 aa).

Transmembrane regions (helical) follow at residues 31 to 51, 67 to 87, and 100 to 120; these read IYWYGIIFVCGFLLAILTYSL, YIFLAIPMTIIGARLWSLAIG, and LAIQGGVIAGVLSAAIYFPLI. Arg-163 is a binding site for a 1,2-diacyl-sn-glycero-3-phospho-(1'-sn-glycerol). Transmembrane regions (helical) follow at residues 213–233, 235–255, and 277–297; these read PLFLYESFFNVIVFVFIYFGL, YIKQLKIGFVSMSYFFFYGVI, and SLLLIFGVLGALYVQFIAPIL.

Belongs to the Lgt family.

The protein localises to the cell membrane. The enzyme catalyses L-cysteinyl-[prolipoprotein] + a 1,2-diacyl-sn-glycero-3-phospho-(1'-sn-glycerol) = an S-1,2-diacyl-sn-glyceryl-L-cysteinyl-[prolipoprotein] + sn-glycerol 1-phosphate + H(+). The protein operates within protein modification; lipoprotein biosynthesis (diacylglyceryl transfer). In terms of biological role, catalyzes the transfer of the diacylglyceryl group from phosphatidylglycerol to the sulfhydryl group of the N-terminal cysteine of a prolipoprotein, the first step in the formation of mature lipoproteins. The sequence is that of Phosphatidylglycerol--prolipoprotein diacylglyceryl transferase from Ureaplasma urealyticum serovar 10 (strain ATCC 33699 / Western).